The chain runs to 1240 residues: RNA-directed RNA polymerase VP2 (1240 aa).

The 249-residue stretch at 516-764 (LVANYINKHM…KLYALFGARI (249 aa)) folds into the RdRp catalytic domain.

The protein belongs to the reoviridae RNA-directed RNA polymerase family.

It localises to the virion. The catalysed reaction is RNA(n) + a ribonucleoside 5'-triphosphate = RNA(n+1) + diphosphate. Functionally, RNA-directed RNA polymerase that is involved in transcription and genome replication. Following infection, it catalyzes the synthesis of fully conservative plus strands. After core assembly, which consists in recruitment of one capped plus-strand for each genomic segments and polymerase complexes, the polymerase switches mode and catalyzes the synthesis of complementary minus-strands. The protein is RNA-directed RNA polymerase VP2 (S2) of Oncorhynchus keta (Chum salmon).